The chain runs to 204 residues: Small ribosomal subunit protein uS7 (204 aa).

It belongs to the universal ribosomal protein uS7 family. Part of the 30S ribosomal subunit.

In terms of biological role, one of the primary rRNA binding proteins, it binds directly to 16S rRNA where it nucleates assembly of the head domain of the 30S subunit. Is located at the subunit interface close to the decoding center. The protein is Small ribosomal subunit protein uS7 of Methanoregula boonei (strain DSM 21154 / JCM 14090 / 6A8).